The primary structure comprises 667 residues: Transmembrane 9 superfamily member 1 (667 aa).

A signal peptide spans 1 to 22; that stretch reads MIYKMAHVQLLLLYFFVSTVKA. Over 23–302 the chain is Lumenal; the sequence is FYLPGVAPTT…DKYLHVYDPS (280 aa). N-linked (GlcNAc...) asparagine glycans are attached at residues N61 and N282. Residues 303 to 323 form a helical membrane-spanning segment; that stretch reads IQWFSLINFSLVVVLLSSVVI. Residues 324–370 lie on the Cytoplasmic side of the membrane; the sequence is HSLLRALKSDFARYNELNLDDDFQEDSGWKLNHGDVFRSPSQSLTLS. A helical membrane pass occupies residues 371 to 391; it reads ILVGSGVQLFLMVTCSIFFAA. Topologically, residues 392–405 are lumenal; sequence LGFLSPSSRGSLAT. The helical transmembrane segment at 406–426 threads the bilayer; the sequence is VMFILYALFGFVGSYTSMGIY. The Cytoplasmic portion of the chain corresponds to 427–442; that stretch reads KFFNGPYWKANLILTP. The chain crosses the membrane as a helical span at residues 443 to 463; the sequence is LLVPGAILLIIIALNFFLMFV. Residues 464-474 are Lumenal-facing; the sequence is HSSGVIPASTL. A helical membrane pass occupies residues 475–495; the sequence is FFMVFLWFLFSIPLSFAGSLI. Residues 496-527 are Cytoplasmic-facing; sequence ARKRCHWDEHPTKTNQIARQIPFQPWYLKTIP. A helical transmembrane segment spans residues 528–548; sequence ATLIAGIFPFGSIAVELYFIY. Over 549–560 the chain is Lumenal; the sequence is TSLWFNKIFYMF. A helical membrane pass occupies residues 561–581; that stretch reads GFLFFSFLLLTLTSSLVTILI. The Cytoplasmic segment spans residues 582–596; sequence TYHSLCLENWKWQWR. The chain crosses the membrane as a helical span at residues 597 to 617; that stretch reads GFIIGGAGCALYVFIHSILFT. At 618-635 the chain is on the lumenal side; the sequence is KFKLGGFTTIVLYVGYSS. Residues 636–656 form a helical membrane-spanning segment; sequence VISLLCCLVTGSIGFISSMLF. At 657–667 the chain is on the cytoplasmic side; sequence VRKIYSSIKVD.

The protein belongs to the nonaspanin (TM9SF) (TC 9.A.2) family.

The protein resides in the endosome membrane. Its subcellular location is the vacuole membrane. With TMN2 and TMN3, plays a critical role in the late stages of a nutrient-controlled pathway notably regulating FLO11 gene expression. Acts downstream of RAS2 and TOR. Essential for cell adhesion and filamentous growth. May play a role as effector of cellular copper homeostasis. The chain is Transmembrane 9 superfamily member 1 (EMP70) from Saccharomyces cerevisiae (strain ATCC 204508 / S288c) (Baker's yeast).